A 402-amino-acid polypeptide reads, in one-letter code: Type II NADH:quinone oxidoreductase (402 aa).

FAD is bound by residues 12-16 (GAGYA), 39-40 (NK), and Val-83. Glu-172 is an active-site residue. Residues Asp-302, 319 to 320 (AQ), and Lys-379 contribute to the FAD site.

Belongs to the NADH dehydrogenase family. In terms of assembly, homodimer in solution. Forms homotetramers; dimer of dimers. FAD serves as cofactor.

The protein resides in the cell membrane. It carries out the reaction a quinone + NADH + H(+) = a quinol + NAD(+). The enzyme catalyses a menaquinone + NADH + H(+) = a menaquinol + NAD(+). It catalyses the reaction a ubiquinone + NADH + H(+) = a ubiquinol + NAD(+). Inhibited by HQNO, a quinone derivative. In terms of biological role, alternative, nonproton pumping NADH:quinone oxidoreductase that delivers electrons to the respiratory chain by oxidation of NADH and reduction of quinones, and contributes to the regeneration of NAD(+). Can use DMN, a menaquinone analog, 2,3-dimethoxy-5,6-dimethyl-benzoquinone (DDB), an ubiquinone analog, or 2,3,5,6-tetramethyl-1,4-benzoquinone (Duroquinone, DQ) a plastoquinone analog as electron acceptors. The polypeptide is Type II NADH:quinone oxidoreductase (Staphylococcus aureus (strain NCTC 8325 / PS 47)).